The sequence spans 330 residues: uncharacterized protein (330 aa).

It to H.influenzae HI_0461.

This is an uncharacterized protein from Escherichia coli (strain K12).